A 178-amino-acid polypeptide reads, in one-letter code: MAEAITIARPYAVAVYRLAKEKNALADWSQMLALAAAIAADEQMRAFIDNPKVDAADLERVFLSVSGDRLNEAGTNLIKLLVEYGRLSILPEIAAAFEALKAQDEGVLEAEITAAVQPSDAEFSAIVKRLEAKFGKKVEASVKVDPEIIGGIKIVVGDTVIDASVRGQLQELAYTLKG.

Belongs to the ATPase delta chain family. As to quaternary structure, F-type ATPases have 2 components, F(1) - the catalytic core - and F(0) - the membrane proton channel. F(1) has five subunits: alpha(3), beta(3), gamma(1), delta(1), epsilon(1). F(0) has three main subunits: a(1), b(2) and c(10-14). The alpha and beta chains form an alternating ring which encloses part of the gamma chain. F(1) is attached to F(0) by a central stalk formed by the gamma and epsilon chains, while a peripheral stalk is formed by the delta and b chains.

The protein localises to the cell inner membrane. Its function is as follows. F(1)F(0) ATP synthase produces ATP from ADP in the presence of a proton or sodium gradient. F-type ATPases consist of two structural domains, F(1) containing the extramembraneous catalytic core and F(0) containing the membrane proton channel, linked together by a central stalk and a peripheral stalk. During catalysis, ATP synthesis in the catalytic domain of F(1) is coupled via a rotary mechanism of the central stalk subunits to proton translocation. In terms of biological role, this protein is part of the stalk that links CF(0) to CF(1). It either transmits conformational changes from CF(0) to CF(1) or is implicated in proton conduction. This is ATP synthase subunit delta from Methylobacillus flagellatus (strain ATCC 51484 / DSM 6875 / VKM B-1610 / KT).